A 400-amino-acid polypeptide reads, in one-letter code: F-box/LRR-repeat protein 14 (400 aa).

One can recognise an F-box domain in the interval 2 to 48 (ETHISCLFPELLAMIFGYLDVRDKGRAAQVCTAWRDAAYHKSVWRGV). A required for down-regulation of SNAI1 region spans residues 2–48 (ETHISCLFPELLAMIFGYLDVRDKGRAAQVCTAWRDAAYHKSVWRGV). LRR repeat units follow at residues 144–163 (GLEV…GLLL), 170–191 (RLKS…GHLA), 203–225 (GLEQ…HISR), 229–250 (GLRL…LHLS), and 254–275 (SLRS…MHLA).

In terms of assembly, part of a SCF (SKP1-cullin-F-box) ubiquitin-protein ligase complex. Interacts with SKP1 and CUL1. Interacts with SNAI1; the interaction requires the phosphorylation of the two serine residues in the substrate destruction motif D-S-G-X(2,3,4)-S.

Its subcellular location is the cytoplasm. Its function is as follows. Substrate-recognition component of some SCF (SKP1-CUL1-F-box protein)-type E3 ubiquitin-protein ligase complexes. The SCF(FBXL14) complex acts by mediating ubiquitination and subsequent degradation of SNAI1. The sequence is that of F-box/LRR-repeat protein 14 (FBXL14) from Bos taurus (Bovine).